A 736-amino-acid chain; its full sequence is Prolyl 3-hydroxylase 1 (736 aa).

The signal sequence occupies residues 1-22 (MAVRALKLLTTLLAVVAAASQA). TPR repeat units lie at residues 35–68 (PDLL…RAAL), 143–176 (RSPY…NPEH), 205–238 (HMQE…YFVA), and 301–334 (PSHY…FPND). N-linked (GlcNAc...) asparagine glycosylation is present at N316. Residues 401 to 439 (KRLQEKQKSERETAVRISQEIGNLMKEIETLVEEKTKES) adopt a coiled-coil conformation. 2 N-linked (GlcNAc...) asparagine glycosylation sites follow: N467 and N540. The Fe2OG dioxygenase domain occupies 564–678 (SHLVCRTAIE…RCAIALWFTL (115 aa)). Positions 587, 589, and 659 each coordinate Fe cation. R669 is a catalytic residue. Residues 699 to 736 (SPEEMDLSQEQPLDAQQGPPEPAQESLSGSESKPKDEL) are disordered. Residues 733-736 (KDEL) carry the Prevents secretion from ER motif.

It belongs to the leprecan family. It depends on Fe cation as a cofactor. The cofactor is L-ascorbate. Post-translationally, O-glycosylated; chondroitin sulfate.

Its subcellular location is the endoplasmic reticulum. The protein resides in the secreted. The protein localises to the extracellular space. It is found in the extracellular matrix. It carries out the reaction L-prolyl-[collagen] + 2-oxoglutarate + O2 = trans-3-hydroxy-L-prolyl-[collagen] + succinate + CO2. Basement membrane-associated chondroitin sulfate proteoglycan (CSPG). Has prolyl 3-hydroxylase activity catalyzing the post-translational formation of 3-hydroxyproline in -Xaa-Pro-Gly- sequences in collagens, especially types IV and V. May be involved in the secretory pathway of cells. Has growth suppressive activity in fibroblasts. The protein is Prolyl 3-hydroxylase 1 of Homo sapiens (Human).